A 131-amino-acid chain; its full sequence is Small ribosomal subunit protein uS8 (131 aa).

The protein belongs to the universal ribosomal protein uS8 family. As to quaternary structure, part of the 30S ribosomal subunit. Contacts proteins S5 and S12.

Functionally, one of the primary rRNA binding proteins, it binds directly to 16S rRNA central domain where it helps coordinate assembly of the platform of the 30S subunit. In Paracidovorax citrulli (strain AAC00-1) (Acidovorax citrulli), this protein is Small ribosomal subunit protein uS8.